Here is a 518-residue protein sequence, read N- to C-terminus: AarF domain-containing kinase 1 (518 aa).

A Protein kinase domain is found at serine 149 to alanine 468. Residues leucine 155–valine 163 and lysine 177 each bind ATP. The Proton acceptor role is filled by aspartate 309.

This sequence belongs to the protein kinase superfamily. ADCK protein kinase family.

The protein localises to the mitochondrion. In terms of biological role, essential for maintaining mitochondrial cristae formation and mitochondrial function by acting via YME1L to regulate the mitochondrial structural proteins Opa1 and Mitofilin. This function is likely to be kinase-independent. Functions in tracheal development and larval molting probably by acting in sterol modification and/or intracellular lipid trafficking. The action of this enzyme is not yet clear. It is not known if it has protein kinase activity and what type of substrate it would phosphorylate (Ser, Thr or Tyr). The polypeptide is AarF domain-containing kinase 1 (Drosophila melanogaster (Fruit fly)).